The primary structure comprises 95 residues: Co-chaperonin GroES (95 aa).

The interval 36-55 (QEGEVVAVGSGKTLDDGSKV) is disordered.

It belongs to the GroES chaperonin family. As to quaternary structure, heptamer of 7 subunits arranged in a ring. Interacts with the chaperonin GroEL.

It localises to the cytoplasm. Functionally, together with the chaperonin GroEL, plays an essential role in assisting protein folding. The GroEL-GroES system forms a nano-cage that allows encapsulation of the non-native substrate proteins and provides a physical environment optimized to promote and accelerate protein folding. GroES binds to the apical surface of the GroEL ring, thereby capping the opening of the GroEL channel. In Natranaerobius thermophilus (strain ATCC BAA-1301 / DSM 18059 / JW/NM-WN-LF), this protein is Co-chaperonin GroES.